The primary structure comprises 628 residues: Somatic embryogenesis receptor kinase 2 (628 aa).

Residues 1–29 (MGRKKFEAFGFVCLISLLLLFNSLWLASS) form the signal peptide. At 30-241 (NMEGDALHSL…PTPGGYSATG (212 aa)) the chain is on the extracellular side. The interval 45–85 (DPNNVLQSWDPTLVNPCTWFHVTCNNENSVIRVDLGNADLS) is PSKR1 binding. The tract at residues 56 to 58 (TLV) is CLE44 binding. Cysteines 61 and 68 form a disulfide. Leucine-rich repeat receptor-like protein kinase binding regions lie at residues 62–81 (TWFH…DLGN) and 100–105 (YLELYS). 64–65 (FH) is a brassinolide binding site. LRR repeat units lie at residues 95-119 (LKNL…LGNL), 121-143 (NLVS…LGKL), 144-167 (FKLR…LTNI), and 168-192 (MTLQ…SFSL). Residues Asn-107 and Asn-118 are each glycosylated (N-linked (GlcNAc...) asparagine). 2 leucine-rich repeat receptor-like protein kinase binding regions span residues 126–129 (DLYL) and 148–150 (FLR). 2 N-linked (GlcNAc...) asparagine glycosylation sites follow: Asn-153 and Asn-187. Residues 174–197 (DLSNNRLSGSVPDNGSFSLFTPIS) form a leucine-rich repeat receptor-like protein kinase binding region. An intrachain disulfide couples Cys-205 to Cys-213. The chain crosses the membrane as a helical span at residues 242 to 262 (AIAGGVAAGAALLFAAPALAF). Residues 263-628 (AWWRRRKPQE…LHAMELSGPR (366 aa)) are Cytoplasmic-facing. Thr-302 carries the post-translational modification Phosphothreonine. The 288-residue stretch at 305 to 592 (FSNKNILGRG…GLAEKWDEWQ (288 aa)) folds into the Protein kinase domain. 311 to 319 (LGRGGFGKV) provides a ligand contact to ATP. Residue Thr-328 is modified to Phosphothreonine. Lys-333 lines the ATP pocket. Phosphoserine is present on residues Ser-386 and Ser-389. Asp-432 functions as the Proton acceptor in the catalytic mechanism. A phosphothreonine mark is found at Thr-462, Thr-465, Thr-466, and Thr-471. Tyr-479 is subject to Phosphotyrosine. Residue Ser-481 is modified to Phosphoserine. The residue at position 482 (Thr-482) is a Phosphothreonine. Position 486 is a phosphoserine (Ser-486). Thr-562 carries the post-translational modification Phosphothreonine. At Ser-604 the chain carries Phosphoserine. At Thr-616 the chain carries Phosphothreonine. Ser-625 bears the Phosphoserine mark.

Belongs to the protein kinase superfamily. Ser/Thr protein kinase family. Homo- and heterodimer. Component of the SERK1 signaling complex, composed of KAPP, CDC48A, GRF6 or GRF7, SERK1, SERK2, SERK3/BAK1 and BRI1. Bind to BRI1 in a brassinolide-dependent manner. Heterodimer with PSKR1. Interacts with the EF-Tu receptor EFR and FLS2 in a specific ligand-induced manner. Interacts with ERECTA in a EPF2-induced manner. Interacts with ERL1 in a EPF1-induced manner. Interacts with TMM. In the presence of the signal peptide RGF1, interacts with RGI3/RGFR1 and RGI4/RGFR2/SKM2. Binds to the peptide CLE44 in the presence of TDR. Autophosphorylated. Expressed in flowers, tapetum, developing microspores, all cells of the embryo sac, provascular strands and developing vascular bundles. Low expression in adult vascular tissue.

The protein localises to the cell membrane. The enzyme catalyses L-seryl-[protein] + ATP = O-phospho-L-seryl-[protein] + ADP + H(+). It catalyses the reaction L-threonyl-[protein] + ATP = O-phospho-L-threonyl-[protein] + ADP + H(+). Functionally, serine/threonine-kinase involved in brassinosteroid-dependent and -independent signaling pathways. Acts redundantly with SERK1 as a control point for sporophytic development controlling male gametophyte production. Serves as coreceptor to small peptide (e.g. RGF1 and CLE44) signaling. Involved in the perception of phytosulfokine and subsequent signal transduction. This Arabidopsis thaliana (Mouse-ear cress) protein is Somatic embryogenesis receptor kinase 2.